The primary structure comprises 326 residues: Probable UDP-3-O-acyl-N-acetylglucosamine deacetylase 2, mitochondrial (326 aa).

A mitochondrion-targeting transit peptide spans 1-21; it reads MRLPVTVKATKPSFLVIWIRY. Positions 109, 281, and 285 each coordinate Zn(2+).

It belongs to the LpxC family. Zn(2+) serves as cofactor.

It localises to the mitochondrion. The enzyme catalyses a UDP-3-O-[(3R)-3-hydroxyacyl]-N-acetyl-alpha-D-glucosamine + H2O = a UDP-3-O-[(3R)-3-hydroxyacyl]-alpha-D-glucosamine + acetate. It participates in glycolipid biosynthesis; lipid IV(A) biosynthesis; lipid IV(A) from (3R)-3-hydroxytetradecanoyl-[acyl-carrier-protein] and UDP-N-acetyl-alpha-D-glucosamine: step 2/6. Its function is as follows. Involved in the biosynthesis of lipid A, a phosphorylated glycolipid that in bacteria anchors the lipopolysaccharide to the outer membrane of the cell. Lipid A-like molecules in plants may serve as structural components of the outer membranes of mitochondria and/or chloroplasts, or may be involved in signal transduction or plant defense responses (Potential). In Arabidopsis thaliana (Mouse-ear cress), this protein is Probable UDP-3-O-acyl-N-acetylglucosamine deacetylase 2, mitochondrial (LPXC2).